The primary structure comprises 132 residues: MTRREIREHLFRMLFRKEFHEPTELEEQVLFYFDSLESITPEQQEYLNVRFDKINEKLGEIDTILANASSGWKLNRMGKVDLNIMRLATFEIRFDDEVPVKVAINEAIELAKKYGGDSSASFVNGILAKVID.

This sequence belongs to the NusB family.

Involved in transcription antitermination. Required for transcription of ribosomal RNA (rRNA) genes. Binds specifically to the boxA antiterminator sequence of the ribosomal RNA (rrn) operons. This Lachnoclostridium phytofermentans (strain ATCC 700394 / DSM 18823 / ISDg) (Clostridium phytofermentans) protein is Transcription antitermination protein NusB.